The sequence spans 161 residues: Phosphopantetheine adenylyltransferase (161 aa).

Thr10 is a binding site for substrate. ATP contacts are provided by residues 10-11 (TF) and His18. Substrate-binding residues include Lys42, Leu74, and Arg88. Residues 89-91 (GLR), Glu99, and 124-130 (NSFISST) each bind ATP.

It belongs to the bacterial CoaD family. Homohexamer. It depends on Mg(2+) as a cofactor.

The protein resides in the cytoplasm. The enzyme catalyses (R)-4'-phosphopantetheine + ATP + H(+) = 3'-dephospho-CoA + diphosphate. It functions in the pathway cofactor biosynthesis; coenzyme A biosynthesis; CoA from (R)-pantothenate: step 4/5. Its function is as follows. Reversibly transfers an adenylyl group from ATP to 4'-phosphopantetheine, yielding dephospho-CoA (dPCoA) and pyrophosphate. This chain is Phosphopantetheine adenylyltransferase, found in Photobacterium profundum (strain SS9).